A 451-amino-acid chain; its full sequence is Phosphoglucosamine mutase (451 aa).

Ser-102 acts as the Phosphoserine intermediate in catalysis. The Mg(2+) site is built by Ser-102, Asp-242, Asp-244, and Asp-246. Ser-102 is modified (phosphoserine).

Belongs to the phosphohexose mutase family. Requires Mg(2+) as cofactor. In terms of processing, activated by phosphorylation.

It carries out the reaction alpha-D-glucosamine 1-phosphate = D-glucosamine 6-phosphate. Its function is as follows. Catalyzes the conversion of glucosamine-6-phosphate to glucosamine-1-phosphate. In Staphylococcus epidermidis (strain ATCC 35984 / DSM 28319 / BCRC 17069 / CCUG 31568 / BM 3577 / RP62A), this protein is Phosphoglucosamine mutase.